We begin with the raw amino-acid sequence, 402 residues long: CCA-adding enzyme (402 aa).

Residues Gly-32 and Arg-35 each coordinate ATP. Residues Gly-32 and Arg-35 each contribute to the CTP site. Residues Asp-45 and Asp-47 each contribute to the Mg(2+) site. The ATP site is built by Arg-116, Asp-159, Arg-162, Arg-165, and Arg-168. Positions 116, 159, 162, 165, and 168 each coordinate CTP.

It belongs to the tRNA nucleotidyltransferase/poly(A) polymerase family. Bacterial CCA-adding enzyme type 3 subfamily. Homodimer. Requires Mg(2+) as cofactor.

It catalyses the reaction a tRNA precursor + 2 CTP + ATP = a tRNA with a 3' CCA end + 3 diphosphate. The enzyme catalyses a tRNA with a 3' CCA end + 2 CTP + ATP = a tRNA with a 3' CCACCA end + 3 diphosphate. Catalyzes the addition and repair of the essential 3'-terminal CCA sequence in tRNAs without using a nucleic acid template. Adds these three nucleotides in the order of C, C, and A to the tRNA nucleotide-73, using CTP and ATP as substrates and producing inorganic pyrophosphate. tRNA 3'-terminal CCA addition is required both for tRNA processing and repair. Also involved in tRNA surveillance by mediating tandem CCA addition to generate a CCACCA at the 3' terminus of unstable tRNAs. While stable tRNAs receive only 3'-terminal CCA, unstable tRNAs are marked with CCACCA and rapidly degraded. This chain is CCA-adding enzyme, found in Streptococcus agalactiae serotype III (strain NEM316).